The chain runs to 292 residues: Nucleotide-binding protein azo0399 (292 aa).

Residue 8–15 (GLSGSGKS) coordinates ATP. GTP is bound at residue 57–60 (DMRS).

This sequence belongs to the RapZ-like family.

Functionally, displays ATPase and GTPase activities. This Azoarcus sp. (strain BH72) protein is Nucleotide-binding protein azo0399.